The chain runs to 369 residues: Ferredoxin--NADP reductase 2 (369 aa).

Residues 1–21 (MDLSIPNPVADATRQVEGGSP) form a disordered region. The FAD site is built by D58, Q66, Y71, V111, F146, D311, and T352.

Belongs to the ferredoxin--NADP reductase type 2 family. As to quaternary structure, homodimer. FAD is required as a cofactor.

The enzyme catalyses 2 reduced [2Fe-2S]-[ferredoxin] + NADP(+) + H(+) = 2 oxidized [2Fe-2S]-[ferredoxin] + NADPH. This is Ferredoxin--NADP reductase 2 from Cupriavidus taiwanensis (strain DSM 17343 / BCRC 17206 / CCUG 44338 / CIP 107171 / LMG 19424 / R1) (Ralstonia taiwanensis (strain LMG 19424)).